The sequence spans 252 residues: Adapter protein MecA (252 aa).

This sequence belongs to the MecA family. As to quaternary structure, homodimer.

In terms of biological role, enables the recognition and targeting of unfolded and aggregated proteins to the ClpC protease or to other proteins involved in proteolysis. In Streptococcus uberis (strain ATCC BAA-854 / 0140J), this protein is Adapter protein MecA.